Reading from the N-terminus, the 627-residue chain is Serine/threonine-protein phosphatase 2A 56 kDa regulatory subunit delta 2 isoform (627 aa).

Residues 1-37 (MKGLRSKFVKALSLKDEQGSHKNGHSKSHYISKNGSY) form a disordered region.

This sequence belongs to the phosphatase 2A regulatory subunit B family. As to quaternary structure, PP2A consists of a common heterodimeric core enzyme, composed of a 36 kDa catalytic subunit (subunit C) and a 65 kDa constant regulatory subunit (PR65 or subunit A), that associates with a variety of regulatory subunits. Proteins that associate with the core dimer include three families of regulatory subunits B (the R2/B/PR55/B55, R3/B''/PR72/PR130/PR59 and R5/B'/B56 families), the 48 kDa variable regulatory subunit, viral proteins, and cell signaling molecules.

The protein resides in the cytoplasm. It is found in the cell tip. Its function is as follows. The B regulatory subunit might modulate substrate selectivity and catalytic activity, and might also direct the localization of the catalytic enzyme to a particular subcellular compartment. Has a role in cell shape control and septum formation. This Schizosaccharomyces pombe (strain 972 / ATCC 24843) (Fission yeast) protein is Serine/threonine-protein phosphatase 2A 56 kDa regulatory subunit delta 2 isoform (par2).